The following is a 96-amino-acid chain: MNELIEIEVVYGRPDKQVLLSLSVPVGSTLEDCIKLSGITTHFPEIIPSEAMVGIFSRADKLSSIVKAGDRIEIYRPLTADPKEMRKLRAAKMSKK.

It belongs to the UPF0125 (RnfH) family.

The sequence is that of Protein RnfH from Psychromonas ingrahamii (strain DSM 17664 / CCUG 51855 / 37).